We begin with the raw amino-acid sequence, 255 residues long: SLA class II histocompatibility antigen, DQ haplotype D alpha chain (255 aa).

A signal peptide spans 1–23 (MVPGRVLMWGALALTAVMSACGG). An alpha-1 region spans residues 24–120 (EDIAADHVAS…QVPEVTVFPK (97 aa)). Residues 24 to 217 (EDIAADHVAS…IPAPMSELTE (194 aa)) lie on the Extracellular side of the membrane. N-linked (GlcNAc...) asparagine glycans are attached at residues Asn104 and Asn144. Residues 113–205 (PEVTVFPKSP…LDKPLLKHWE (93 aa)) enclose the Ig-like C1-type domain. The tract at residues 121-204 (SPVMLGQPNT…GLDKPLLKHW (84 aa)) is alpha-2. Cys133 and Cys189 form a disulfide bridge. Positions 205–217 (EPEIPAPMSELTE) are connecting peptide. A helical transmembrane segment spans residues 218–240 (TVVCALGLIVGLVGIVVGTVFII). Over 241–255 (QGLRSGGPSRHQGSL) the chain is Cytoplasmic.

This sequence belongs to the MHC class II family.

The protein localises to the membrane. The sequence is that of SLA class II histocompatibility antigen, DQ haplotype D alpha chain from Sus scrofa (Pig).